A 274-amino-acid polypeptide reads, in one-letter code: MAIHLYKTSTPSTRNGAVDSQVKSNPRNNLIYGQHRCGKGRNARGIITAGHRGGGHKRLYRKIDFRRNEKDIYGRIVTIEYDPNRNAYICLIHYGDGEKRYILHPRGAIIGDTIVSGTEVPIKMGNALPLTDMPLGTAIHNIEITLGKGGQLARAAGAVAKLIAKEGKSATLKLPSGEVRLISKNCSATVGQVGNAGVNQKSLGRAGSKCWLGKRPVVRGVVMNPVDHPHGGGEGRAPIGRKKPATPWGYPALGRRSRKRNKYSDNLILRRRSK.

Disordered regions lie at residues Met1 to Asn25 and Asn224 to Lys274.

Belongs to the universal ribosomal protein uL2 family. Part of the 50S ribosomal subunit.

Its subcellular location is the plastid. It is found in the chloroplast. The sequence is that of Large ribosomal subunit protein uL2cz/uL2cy (rpl2-A) from Cucumis sativus (Cucumber).